A 71-amino-acid polypeptide reads, in one-letter code: Large ribosomal subunit protein bL31 (71 aa).

4 residues coordinate Zn(2+): Cys16, Cys18, Cys37, and Cys40.

It belongs to the bacterial ribosomal protein bL31 family. Type A subfamily. Part of the 50S ribosomal subunit. The cofactor is Zn(2+).

Binds the 23S rRNA. The chain is Large ribosomal subunit protein bL31 from Pseudoalteromonas translucida (strain TAC 125).